We begin with the raw amino-acid sequence, 314 residues long: uncharacterized protein (314 aa).

A run of 2 helical transmembrane segments spans residues 23–43 and 98–118; these read LALGPVHPGGPTLIDLLMALF and MASGIGGALSGALGGVMGPLT. Over residues 165–184 the composition is skewed to gly residues; it reads GLGSGAGGGDVGGGGAGGTT. The segment at 165–314 is disordered; the sequence is GLGSGAGGGD…APDEKTDAGE (150 aa). The span at 190-202 shows a compositional bias: pro residues; the sequence is GPPPVPTSSPPTT. Low complexity-rich tracts occupy residues 203–212 and 219–232; these read PAGAPTKSAT and ASPASAHMGAAGMP. Residues 221 to 241 form a helical membrane-spanning segment; the sequence is PASAHMGAAGMPMVPPGAMGA. The span at 294–314 shows a compositional bias: basic and acidic residues; sequence LLPEHKDFGRIAPDEKTDAGE.

The protein localises to the cell membrane. This is an uncharacterized protein from Mycobacterium tuberculosis (strain ATCC 25618 / H37Rv).